A 586-amino-acid chain; its full sequence is uncharacterized protein (586 aa).

Residues 29–312 (YGIAIGSMVV…LARMRISLES (284 aa)) enclose the ABC transmembrane type-1 domain. A run of 4 helical transmembrane segments spans residues 30–50 (GIAI…AWIM), 66–86 (VFGV…ATYV), 162–184 (MVIQ…ILGV), and 256–276 (IMET…GVLV). In terms of domain architecture, ABC transporter spans 346-580 (IRFKDVNFSY…DGVYRRLYEL (235 aa)). Position 379–386 (379–386 (GPSGAGKS)) interacts with ATP.

Belongs to the ABC transporter superfamily.

The protein resides in the cell membrane. This is an uncharacterized protein from Sinorhizobium fredii (strain NBRC 101917 / NGR234).